The sequence spans 177 residues: Large ribosomal subunit protein uL6 (177 aa).

Belongs to the universal ribosomal protein uL6 family. As to quaternary structure, part of the 50S ribosomal subunit.

Its function is as follows. This protein binds to the 23S rRNA, and is important in its secondary structure. It is located near the subunit interface in the base of the L7/L12 stalk, and near the tRNA binding site of the peptidyltransferase center. The chain is Large ribosomal subunit protein uL6 from Tolumonas auensis (strain DSM 9187 / NBRC 110442 / TA 4).